The following is a 116-amino-acid chain: Nucleoid-associated protein MLBr02330 (116 aa).

A disordered region spans residues 96–116 (LTSAMRPTAPPPTPPTYMAGT).

It belongs to the YbaB/EbfC family. Homodimer.

The protein localises to the cytoplasm. It localises to the nucleoid. Binds to DNA and alters its conformation. May be involved in regulation of gene expression, nucleoid organization and DNA protection. In Mycobacterium leprae (strain Br4923), this protein is Nucleoid-associated protein MLBr02330.